The primary structure comprises 117 residues: Large ribosomal subunit protein eL34 (117 aa).

Ser12 is subject to Phosphoserine. 2 positions are modified to N6-acetyllysine: Lys36 and Lys43. Lys108 is covalently cross-linked (Glycyl lysine isopeptide (Lys-Gly) (interchain with G-Cter in SUMO2)).

The protein belongs to the eukaryotic ribosomal protein eL34 family. As to quaternary structure, component of the large ribosomal subunit.

The protein resides in the cytoplasm. The protein localises to the cytosol. It is found in the endoplasmic reticulum. Its function is as follows. Component of the large ribosomal subunit. The ribosome is a large ribonucleoprotein complex responsible for the synthesis of proteins in the cell. This chain is Large ribosomal subunit protein eL34 (Rpl34), found in Mus musculus (Mouse).